Here is a 382-residue protein sequence, read N- to C-terminus: Lactosylceramide 1,3-N-acetyl-beta-D-glucosaminyltransferase B (382 aa).

Over 1–13 the chain is Cytoplasmic; it reads MAVLKMPRFKKYH. Residues 14 to 30 form a helical; Signal-anchor for type II membrane protein membrane-spanning segment; that stretch reads LRLMITCFSTLLLMTYW. Residues 31–382 lie on the Lumenal side of the membrane; that stretch reads EKIDNCVVTH…CKAAFFEEDT (352 aa). N-linked (GlcNAc...) asparagine glycans are attached at residues Asn57, Asn112, Asn167, and Asn276.

It belongs to the glycosyltransferase 31 family.

It localises to the golgi apparatus membrane. It carries out the reaction a beta-D-Gal-(1-&gt;4)-beta-D-Glc-(1&lt;-&gt;1)-Cer(d18:1(4E)) + UDP-N-acetyl-alpha-D-glucosamine = a beta-D-GlcNAc-(1-&gt;3)-beta-D-Gal-(1-&gt;4)-beta-D-Glc-(1&lt;-&gt;1)-Cer(d18:1(4E)) + UDP + H(+). The enzyme catalyses a neolactoside nLc4Cer(d18:1(4E)) + UDP-N-acetyl-alpha-D-glucosamine = a neolactoside IV(3)-beta-GlcNAc-nLc4Cer(d18:1(4E)) + UDP + H(+). The protein operates within protein modification; protein glycosylation. Its function is as follows. Beta-1,3-N-acetylglucosaminyltransferase that plays a key role in the synthesis of lacto- or neolacto-series carbohydrate chains on glycolipids. The sequence is that of Lactosylceramide 1,3-N-acetyl-beta-D-glucosaminyltransferase B (b3gnt5b) from Danio rerio (Zebrafish).